Reading from the N-terminus, the 310-residue chain is Mycothiol acetyltransferase (310 aa).

2 consecutive N-acetyltransferase domains span residues 5 to 155 (TTVE…HPAR) and 160 to 309 (PPFR…LPAA). 80–82 (LLV) lines the acetyl-CoA pocket. Positions 187, 226, and 238 each coordinate 1D-myo-inositol 2-(L-cysteinylamino)-2-deoxy-alpha-D-glucopyranoside. Residue 242–244 (IAT) coordinates acetyl-CoA. Tyr276 contributes to the 1D-myo-inositol 2-(L-cysteinylamino)-2-deoxy-alpha-D-glucopyranoside binding site. Acetyl-CoA is bound at residue 281–286 (NERALR).

Belongs to the acetyltransferase family. MshD subfamily. Monomer.

The enzyme catalyses 1D-myo-inositol 2-(L-cysteinylamino)-2-deoxy-alpha-D-glucopyranoside + acetyl-CoA = mycothiol + CoA + H(+). Catalyzes the transfer of acetyl from acetyl-CoA to desacetylmycothiol (Cys-GlcN-Ins) to form mycothiol. This chain is Mycothiol acetyltransferase, found in Acidimicrobium ferrooxidans (strain DSM 10331 / JCM 15462 / NBRC 103882 / ICP).